A 404-amino-acid chain; its full sequence is Cytoplasmic tRNA 2-thiolation protein 2 (404 aa).

It belongs to the CTU2/NCS2 family.

Its subcellular location is the cytoplasm. It participates in tRNA modification; 5-methoxycarbonylmethyl-2-thiouridine-tRNA biosynthesis. Functionally, plays a central role in 2-thiolation of mcm(5)S(2)U at tRNA wobble positions of tRNA(Lys), tRNA(Glu) and tRNA(Gln). May act by forming a heterodimer with NCS6/CTU1 that ligates sulfur from thiocarboxylated URM1 onto the uridine of tRNAs at wobble position. The chain is Cytoplasmic tRNA 2-thiolation protein 2 from Drosophila mojavensis (Fruit fly).